The chain runs to 324 residues: tRNA U34 carboxymethyltransferase (324 aa).

Carboxy-S-adenosyl-L-methionine contacts are provided by residues K91, W105, K110, G130, 152–154, 181–182, M196, Y200, and R315; these read DPS and IE.

This sequence belongs to the class I-like SAM-binding methyltransferase superfamily. CmoB family. As to quaternary structure, homotetramer.

It carries out the reaction carboxy-S-adenosyl-L-methionine + 5-hydroxyuridine(34) in tRNA = 5-carboxymethoxyuridine(34) in tRNA + S-adenosyl-L-homocysteine + H(+). Functionally, catalyzes carboxymethyl transfer from carboxy-S-adenosyl-L-methionine (Cx-SAM) to 5-hydroxyuridine (ho5U) to form 5-carboxymethoxyuridine (cmo5U) at position 34 in tRNAs. This chain is tRNA U34 carboxymethyltransferase, found in Photobacterium profundum (strain SS9).